We begin with the raw amino-acid sequence, 98 residues long: Leydig cell tumor 10 kDa protein homolog (98 aa).

Disordered stretches follow at residues M1 to A38 and S73 to A98. A compositionally biased stretch (low complexity) spans S16–A25. The segment covering R28–A38 has biased composition (basic residues). Residues S73 to A83 are compositionally biased toward low complexity.

Belongs to the UPF0390 family.

Its function is as follows. May have a potential role in hypercalcemia of malignancy. The chain is Leydig cell tumor 10 kDa protein homolog from Bos taurus (Bovine).